A 1158-amino-acid polypeptide reads, in one-letter code: ATP-dependent helicase/deoxyribonuclease subunit B (1158 aa).

It belongs to the helicase family. AddB/RexB type 2 subfamily. In terms of assembly, heterodimer of AddA and RexB. Mg(2+) serves as cofactor.

Its function is as follows. The heterodimer acts as both an ATP-dependent DNA helicase and an ATP-dependent, dual-direction single-stranded exonuclease. Recognizes the chi site generating a DNA molecule suitable for the initiation of homologous recombination. This subunit has 5' -&gt; 3' nuclease activity but not helicase activity. The sequence is that of ATP-dependent helicase/deoxyribonuclease subunit B from Lactobacillus johnsonii (strain CNCM I-12250 / La1 / NCC 533).